The sequence spans 180 residues: Cytidylate kinase (180 aa).

An ATP-binding site is contributed by 7-15 (GPPGSGTTT).

The protein belongs to the cytidylate kinase family. Type 2 subfamily.

Its subcellular location is the cytoplasm. It carries out the reaction CMP + ATP = CDP + ADP. The catalysed reaction is dCMP + ATP = dCDP + ADP. This is Cytidylate kinase (cmk) from Archaeoglobus fulgidus (strain ATCC 49558 / DSM 4304 / JCM 9628 / NBRC 100126 / VC-16).